A 478-amino-acid polypeptide reads, in one-letter code: FERM domain-containing protein B (478 aa).

Disordered stretches follow at residues 19–39, 129–196, and 202–221; these read ELIPTQSQGSPSLSSSSTITS, EENS…GFLT, and KAQSPQLQSQSSSLSTTIAS. 2 stretches are compositionally biased toward low complexity: residues 22–39 and 129–164; these read PTQSQGSPSLSSSSTITS and EENSPSSSTSSPILSGLSSIRGKKSNASSTSNANDG. The 421-residue stretch at 48–468 folds into the FERM domain; it reads VLIRIYFIDD…DWSEEWESKE (421 aa). The segment covering 165 to 179 has biased composition (gly residues); that stretch reads SGSGSGSGSGSGSGS. Composition is skewed to low complexity over residues 180 to 189 and 204 to 216; these read GTSTPNSPKG and QSPQLQSQSSSLS.

The polypeptide is FERM domain-containing protein B (frmB) (Dictyostelium discoideum (Social amoeba)).